The primary structure comprises 273 residues: Protein E6 (273 aa).

Zinc fingers lie at residues 27-63 (CIFC…CRDC) and 100-140 (CTVC…CSSC).

It belongs to the papillomaviridae E6 protein family. As to quaternary structure, forms homodimers. Interacts with ubiquitin-protein ligase UBE3A/E6-AP; this interaction stimulates UBE3A ubiquitin activity. Interacts with host BAK1.

It localises to the host cytoplasm. The protein localises to the host nucleus. In terms of biological role, plays a major role in the induction and maintenance of cellular transformation. E6 associates with host UBE3A/E6-AP ubiquitin-protein ligase and modulates its activity. Protects host keratinocytes from apoptosis by mediating the degradation of host BAK1. May also inhibit host immune response. The sequence is that of Protein E6 from Sylvilagus floridanus (Cottontail rabbit).